The chain runs to 417 residues: NADH-quinone oxidoreductase subunit D (417 aa).

Belongs to the complex I 49 kDa subunit family. As to quaternary structure, NDH-1 is composed of 14 different subunits. Subunits NuoB, C, D, E, F, and G constitute the peripheral sector of the complex.

The protein localises to the cell inner membrane. The enzyme catalyses a quinone + NADH + 5 H(+)(in) = a quinol + NAD(+) + 4 H(+)(out). Functionally, NDH-1 shuttles electrons from NADH, via FMN and iron-sulfur (Fe-S) centers, to quinones in the respiratory chain. The immediate electron acceptor for the enzyme in this species is believed to be ubiquinone. Couples the redox reaction to proton translocation (for every two electrons transferred, four hydrogen ions are translocated across the cytoplasmic membrane), and thus conserves the redox energy in a proton gradient. The protein is NADH-quinone oxidoreductase subunit D of Francisella tularensis subsp. tularensis (strain FSC 198).